A 314-amino-acid polypeptide reads, in one-letter code: MANSIQDALYLSFEREQWAELRKSVPLTLSEAELTQLKGMNEKLSLDEVTDIYLPLSRLLNLIVGAKQQRGLVIDKFLSQQAPKSPYIISIAGSVAVGKSTTARILQTLLQRWPEHPKVDLVTTDGFLYPLAELKRKGLLQRKGFPESYDTKLLGEFISAVKSGDNNVKVPLYSHITYDRLTDQHQVIAQPDIIILEGLNVLQTGLDTLVETRRPFVSDFVDFSIYVDADESLLKDWYQQRFLQFRHGAFNDPRSFFHHYATLSDGEANAIAANIWDTINGPNLQLNIQPTRERAKLILKKGKDHLISQVLMRR.

93–100 (GSVAVGKS) is an ATP binding site.

Belongs to the prokaryotic pantothenate kinase family.

It localises to the cytoplasm. It carries out the reaction (R)-pantothenate + ATP = (R)-4'-phosphopantothenate + ADP + H(+). Its pathway is cofactor biosynthesis; coenzyme A biosynthesis; CoA from (R)-pantothenate: step 1/5. The sequence is that of Pantothenate kinase from Shewanella denitrificans (strain OS217 / ATCC BAA-1090 / DSM 15013).